The chain runs to 165 residues: Glycine cleavage system H protein, mitochondrial (165 aa).

The 83-residue stretch at 57-139 (NAIVGISSYA…YEKGWLFKVD (83 aa)) folds into the Lipoyl-binding domain. K98 is subject to N6-lipoyllysine.

The protein belongs to the GcvH family. The glycine cleavage system is composed of four proteins: P, T, L and H. It depends on (R)-lipoate as a cofactor.

It localises to the mitochondrion. Functionally, the glycine cleavage system catalyzes the degradation of glycine. The H protein shuttles the methylamine group of glycine from the P protein to the T protein. The chain is Glycine cleavage system H protein, mitochondrial (ppl) from Drosophila melanogaster (Fruit fly).